Consider the following 458-residue polypeptide: UDP-N-acetylglucosamine 1-carboxyvinyltransferase (458 aa).

Residue 22–23 (KN) participates in phosphoenolpyruvate binding. R94 contacts UDP-N-acetyl-alpha-D-glucosamine. The active-site Proton donor is the D119. Positions 309 and 331 each coordinate UDP-N-acetyl-alpha-D-glucosamine.

It belongs to the EPSP synthase family. MurA subfamily.

It localises to the cytoplasm. The enzyme catalyses phosphoenolpyruvate + UDP-N-acetyl-alpha-D-glucosamine = UDP-N-acetyl-3-O-(1-carboxyvinyl)-alpha-D-glucosamine + phosphate. It functions in the pathway cell wall biogenesis; peptidoglycan biosynthesis. Its function is as follows. Cell wall formation. Adds enolpyruvyl to UDP-N-acetylglucosamine. The polypeptide is UDP-N-acetylglucosamine 1-carboxyvinyltransferase (Chlamydia pneumoniae (Chlamydophila pneumoniae)).